We begin with the raw amino-acid sequence, 640 residues long: Threonine--tRNA ligase (640 aa).

One can recognise a TGS domain in the interval 1 to 61; it reads MPTITLPDGS…ERDASLQIIT (61 aa). Residues 242–533 form a catalytic region; that stretch reads DHRRIGKQLD…LIEHYAGAFP (292 aa). Positions 333, 384, and 510 each coordinate Zn(2+).

This sequence belongs to the class-II aminoacyl-tRNA synthetase family. Homodimer. The cofactor is Zn(2+).

It is found in the cytoplasm. The enzyme catalyses tRNA(Thr) + L-threonine + ATP = L-threonyl-tRNA(Thr) + AMP + diphosphate + H(+). Catalyzes the attachment of threonine to tRNA(Thr) in a two-step reaction: L-threonine is first activated by ATP to form Thr-AMP and then transferred to the acceptor end of tRNA(Thr). Also edits incorrectly charged L-seryl-tRNA(Thr). In Stutzerimonas stutzeri (strain A1501) (Pseudomonas stutzeri), this protein is Threonine--tRNA ligase.